A 631-amino-acid polypeptide reads, in one-letter code: Fusexin 1 (631 aa).

The N-terminal stretch at methionine 1–alanine 19 is a signal peptide. The segment at threonine 20 to serine 90 is domain I N-terminus. Over threonine 20–aspartate 537 the chain is Extracellular. The segment at threonine 91–asparagine 170 is domain II N-terminus. Ca(2+)-binding residues include aspartate 112, serine 146, tyrosine 149, and aspartate 150. Residues cysteine 125 and cysteine 155 are joined by a disulfide bond. The interval serine 143–valine 148 is fusion loop, required for fusogenic activity, not required for membrane surface localization. Residues proline 171 to proline 224 are domain I central section. The segment at glutamate 225–phenylalanine 316 is domain II C-terminus. The segment at valine 317 to glycine 348 is domain I C-terminus. Residues aspartate 349–serine 455 are domain III. Cystine bridges form between cysteine 389–cysteine 432, cysteine 457–cysteine 477, and cysteine 490–cysteine 506. The interval aspartate 443–asparagine 467 is disordered. The domain IV, required for fusogenic activity stretch occupies residues glutamate 456–glutamine 509. Residues aspartate 510–aspartate 537 form a stem region. The helical transmembrane segment at leucine 538–glycine 558 threads the bilayer. At tyrosine 559 to proline 590 the chain is on the cytoplasmic side. The helical transmembrane segment at valine 591–phenylalanine 611 threads the bilayer. Residue histidine 612 is a topological domain, extracellular. Residues proline 613–phenylalanine 630 traverse the membrane as a helical segment. Position 631 (arginine 631) is a topological domain, cytoplasmic.

This sequence belongs to the HAP2/GCS1 family. Fusexin 1 subfamily. Monomer in solution, crystallizes as a trimer in high salt (2.5 M NaCl, 0.2 M CaCl(2)). The trimer is stabilized by interdomain contacts and numerous Ca(2+) and Na(+) ions.

It is found in the cell surface. The protein resides in the cell membrane. Functionally, exhibits fusogenic activity. Mediates cell-cell fusion in mammalian cells when present in both cells (bilateral fusion). The polypeptide is Fusexin 1 (Uncultured archaeon).